The primary structure comprises 339 residues: Adenylosuccinate synthetase (339 aa).

GTP-binding positions include 12–18 (GDEGKGS) and 42–44 (GHS). Aspartate 13 serves as the catalytic Proton acceptor. The Mg(2+) site is built by aspartate 13 and glycine 42. Residues 13–16 (DEGK), 40–43 (NAGH), threonine 127, arginine 141, glutamine 179, threonine 194, and arginine 256 contribute to the IMP site. Histidine 43 serves as the catalytic Proton donor. Substrate is bound at residue 252–258 (TVTGRRR). Residues arginine 258, 284–286 (MLD), and 324–326 (KTG) each bind GTP.

This sequence belongs to the adenylosuccinate synthetase family. Homodimer. It depends on Mg(2+) as a cofactor.

It localises to the cytoplasm. It catalyses the reaction IMP + L-aspartate + GTP = N(6)-(1,2-dicarboxyethyl)-AMP + GDP + phosphate + 2 H(+). The protein operates within purine metabolism; AMP biosynthesis via de novo pathway; AMP from IMP: step 1/2. Functionally, plays an important role in the de novo pathway of purine nucleotide biosynthesis. Catalyzes the first committed step in the biosynthesis of AMP from IMP. The protein is Adenylosuccinate synthetase of Pyrococcus horikoshii (strain ATCC 700860 / DSM 12428 / JCM 9974 / NBRC 100139 / OT-3).